The primary structure comprises 895 residues: Eukaryotic translation initiation factor 3 subunit C (895 aa).

A disordered region spans residues 1 to 108; sequence MSGFFRKVGD…DSDSEEEVKK (108 aa). Composition is skewed to acidic residues over residues 11–31 and 52–75; these read SDSE…ESGD and DDSD…DDDN. The PCI domain maps to 638–812; sequence FHMHINLELL…NVVSFHRLEL (175 aa). Basic and acidic residues predominate over residues 838-860; that stretch reads DAKLGEGKEQRSGAGGERGDREG. Residues 838–895 form a disordered region; the sequence is DAKLGEGKEQRSGAGGERGDREGGQPGGRRERRGGSAARGRGRGRGRAQQFQALGQKV. Residues 884-895 show a composition bias toward low complexity; that stretch reads RAQQFQALGQKV.

Belongs to the eIF-3 subunit C family. In terms of assembly, component of the eukaryotic translation initiation factor 3 (eIF-3) complex.

The protein localises to the cytoplasm. Its function is as follows. Component of the eukaryotic translation initiation factor 3 (eIF-3) complex, which is involved in protein synthesis of a specialized repertoire of mRNAs and, together with other initiation factors, stimulates binding of mRNA and methionyl-tRNAi to the 40S ribosome. The eIF-3 complex specifically targets and initiates translation of a subset of mRNAs involved in cell proliferation. This Mycosarcoma maydis (Corn smut fungus) protein is Eukaryotic translation initiation factor 3 subunit C.